We begin with the raw amino-acid sequence, 593 residues long: MKRTVYCGEVTDALVGQEVTVNGWVQRRRDHGSLIFVDLRDRTGLVQVVFDVEECGADLFRKAEQVRSEYVLAVRGRLVHRTPEAVNPNIPTGRFEIRALDLRILSPAKTPPFYIQDDLDVDETVRLKYRYLDLRRPEMQRNLILRHRVTKAVRDFFDEHGFLEIETPMLTKSTPEGARDYLVPSRVNPGKFYALPQSPQIFKQLCMVSGLERYVQIVRCFRDEDLRADRQPEFTQIDVEMSFVERDDVLSMMEQMVARVFRDALGVEVPTPFKRLTYAEAMARYGSDKPDLRFGMELVDVSDVAAGCGFGVFKGAVEAGGQVKGINAKGCGGYSRKQIDELTEFVKTYKAKGLAYIALGEGGEVRSSFTKFLTEAETAEIVRRLEGEPGDLLLFVADQPDVVAAALGALRVEMGNRLGLRKPGEFNLLWVIDFPLLEWDEEENRFVAVHHPFTSPHPEDLDKVFKEGATREELAAIRANAYDLVLNGVELGGGSIRIHQRPLQNRMFELLGFTPEEAQAKFGFLLEAFEYGAPPHGGIAFGLDRFVMLLAGRQSIRDVIAFPKTAKATDLMTDAPSEVAPKQLQELHIRTTV.

L-aspartate is bound at residue glutamate 176. The tract at residues 200–203 (QIFK) is aspartate. Arginine 222 is an L-aspartate binding site. ATP-binding positions include 222-224 (RDE) and glutamine 231. Residue histidine 450 coordinates L-aspartate. Glutamate 490 contacts ATP. Arginine 497 contributes to the L-aspartate binding site. 542 to 545 (GLDR) lines the ATP pocket.

It belongs to the class-II aminoacyl-tRNA synthetase family. Type 1 subfamily. In terms of assembly, homodimer.

It localises to the cytoplasm. It carries out the reaction tRNA(Asx) + L-aspartate + ATP = L-aspartyl-tRNA(Asx) + AMP + diphosphate. Its function is as follows. Aspartyl-tRNA synthetase with relaxed tRNA specificity since it is able to aspartylate not only its cognate tRNA(Asp) but also tRNA(Asn). Reaction proceeds in two steps: L-aspartate is first activated by ATP to form Asp-AMP and then transferred to the acceptor end of tRNA(Asp/Asn). The sequence is that of Aspartate--tRNA(Asp/Asn) ligase from Symbiobacterium thermophilum (strain DSM 24528 / JCM 14929 / IAM 14863 / T).